The chain runs to 142 residues: UPF0102 protein PsycPRwf_0497 (142 aa).

It belongs to the UPF0102 family.

The protein is UPF0102 protein PsycPRwf_0497 of Psychrobacter sp. (strain PRwf-1).